Here is a 570-residue protein sequence, read N- to C-terminus: MRVSKYLLSTQKETPANAEVVSHQLMLRAGMIRRNASGLYSWLPTGLRVLRKIEAIVREEMNKAGSVEILMPMVQPADLWVETGRFEKFGPELLRFQDRHNRDFVLGPTHEEVITDIVRKEVNSYKQLPLNLYQIQTKFRDEVRPRFGVMRSREFLMKDAYSFHIDQETMDETYEAMFQAYSNILTRLGLAFRPVMADTGSIGGSMSHEFHVLANSGEDLIAYSTESDYAANIEKCEAPLPTETRQAATSEMTLVDTPNAKTIAELVEQHGIAIEKTVKTLIVKGATEEAPLVAIVIRGDHELNEVKAEKLDAVLAPFEFADEAAIRDAIGAGTGSIGPVGLNMPVFVDHSVSIMSDFGAGANQDGKHYFGINWERDLPEAPAFDLRNIIEGEPSPCGKGTIALLRGIEVGHIFQLGTNYSEAMNANVLDQNGKSQTLLMGCYGVGVSRMVAAAIEQNNDDRGIIWPEAIAPFTVGILPMNMHKSHRVKDIAEQLYQDLNDAGIEVMFDDRKERPGVMFADMELIGIPHVVVIGDRNIDNGMFEYKNRRTGEKQDIPLDQIVEFLKAQQA.

It belongs to the class-II aminoacyl-tRNA synthetase family. ProS type 1 subfamily. As to quaternary structure, homodimer.

Its subcellular location is the cytoplasm. The catalysed reaction is tRNA(Pro) + L-proline + ATP = L-prolyl-tRNA(Pro) + AMP + diphosphate. Functionally, catalyzes the attachment of proline to tRNA(Pro) in a two-step reaction: proline is first activated by ATP to form Pro-AMP and then transferred to the acceptor end of tRNA(Pro). As ProRS can inadvertently accommodate and process non-cognate amino acids such as alanine and cysteine, to avoid such errors it has two additional distinct editing activities against alanine. One activity is designated as 'pretransfer' editing and involves the tRNA(Pro)-independent hydrolysis of activated Ala-AMP. The other activity is designated 'posttransfer' editing and involves deacylation of mischarged Ala-tRNA(Pro). The misacylated Cys-tRNA(Pro) is not edited by ProRS. This is Proline--tRNA ligase from Shewanella pealeana (strain ATCC 700345 / ANG-SQ1).